The primary structure comprises 252 residues: Imidazole glycerol phosphate synthase subunit HisF (252 aa).

Catalysis depends on residues Asp-11 and Asp-130.

The protein belongs to the HisA/HisF family. Heterodimer of HisH and HisF.

It localises to the cytoplasm. The enzyme catalyses 5-[(5-phospho-1-deoxy-D-ribulos-1-ylimino)methylamino]-1-(5-phospho-beta-D-ribosyl)imidazole-4-carboxamide + L-glutamine = D-erythro-1-(imidazol-4-yl)glycerol 3-phosphate + 5-amino-1-(5-phospho-beta-D-ribosyl)imidazole-4-carboxamide + L-glutamate + H(+). Its pathway is amino-acid biosynthesis; L-histidine biosynthesis; L-histidine from 5-phospho-alpha-D-ribose 1-diphosphate: step 5/9. Functionally, IGPS catalyzes the conversion of PRFAR and glutamine to IGP, AICAR and glutamate. The HisF subunit catalyzes the cyclization activity that produces IGP and AICAR from PRFAR using the ammonia provided by the HisH subunit. The protein is Imidazole glycerol phosphate synthase subunit HisF of Bacillus cereus (strain AH187).